A 373-amino-acid chain; its full sequence is Spore germination protein A3 (373 aa).

A signal peptide spans Met1–Gly17. A lipid anchor (N-palmitoyl cysteine) is attached at Cys18. Cys18 is lipidated: S-diacylglycerol cysteine.

Belongs to the GerABKC lipoprotein family.

Its subcellular location is the cell membrane. Its function is as follows. Forms a complex at the inner spore membrane which acts as a receptor for L-alanine, thus is involved in the stimulation of germination in response to alanine. Can stimulate germination in the absence of GerD and GerK gene products (fructose and glucose receptors, respectively), but the response is improved in their presence. The chain is Spore germination protein A3 (gerAC) from Bacillus subtilis (strain 168).